A 626-amino-acid chain; its full sequence is tRNA uridine 5-carboxymethylaminomethyl modification enzyme MnmG (626 aa).

An FAD-binding site is contributed by 13–18; the sequence is GGGHAG. 273-287 is an NAD(+) binding site; sequence GPRYCPSIEDKIHRF.

The protein belongs to the MnmG family. In terms of assembly, homodimer. Heterotetramer of two MnmE and two MnmG subunits. It depends on FAD as a cofactor.

It localises to the cytoplasm. NAD-binding protein involved in the addition of a carboxymethylaminomethyl (cmnm) group at the wobble position (U34) of certain tRNAs, forming tRNA-cmnm(5)s(2)U34. This Acinetobacter baumannii (strain ATCC 17978 / DSM 105126 / CIP 53.77 / LMG 1025 / NCDC KC755 / 5377) protein is tRNA uridine 5-carboxymethylaminomethyl modification enzyme MnmG.